An 89-amino-acid polypeptide reads, in one-letter code: UPF0250 protein CV_3095 (89 aa).

Belongs to the UPF0250 family.

This chain is UPF0250 protein CV_3095, found in Chromobacterium violaceum (strain ATCC 12472 / DSM 30191 / JCM 1249 / CCUG 213 / NBRC 12614 / NCIMB 9131 / NCTC 9757 / MK).